We begin with the raw amino-acid sequence, 342 residues long: Inactive chitinase-like protein 2 (342 aa).

Positions 1–19 (MKEIVRALEGYGPPKDKAA) are cleaved as a signal peptide. One can recognise a Chitin-binding type-1 domain in the interval 20–60 (EQCGWQAGGALCPGGLCCSQYGWCANTPEYCGSGCQSQCDG). Disulfide bonds link cysteine 22–cysteine 37, cysteine 31–cysteine 43, cysteine 36–cysteine 80, cysteine 84–cysteine 88, cysteine 122–cysteine 184, cysteine 196–cysteine 204, and cysteine 301–cysteine 333.

This sequence belongs to the glycosyl hydrolase 19 family. Chitinase class I subfamily.

In terms of biological role, inactive chitinase-like protein that does not exhibit hydrolytic activity toward chitin. Binds strongly to chitin and possesses antifungal activity toward the fungal pathogen Altenaria alternata in plate assays. Probably involved in defense against fungal pathogens through a mechanism that only involves carbohydrate binding. This Hevea brasiliensis (Para rubber tree) protein is Inactive chitinase-like protein 2.